A 364-amino-acid chain; its full sequence is Probable mannose-1-phosphate guanylyltransferase 2 (364 aa).

Positions 6 and 7 each coordinate GDP-alpha-D-mannose. Residues Gly9, Gly11, Thr12, Arg13, and Lys23 each contribute to the diphosphate site. GDP-alpha-D-mannose is bound by residues Gly88, Asn112, Asp114, Gly149, and Asn176.

It belongs to the transferase hexapeptide repeat family.

The enzyme catalyses alpha-D-mannose 1-phosphate + GTP + H(+) = GDP-alpha-D-mannose + diphosphate. Its pathway is nucleotide-sugar biosynthesis; GDP-alpha-D-mannose biosynthesis; GDP-alpha-D-mannose from alpha-D-mannose 1-phosphate (GTP route): step 1/1. Functionally, catalyzes a reaction of the Smirnoff-Wheeler pathway, the major route to ascorbate biosynthesis in plants. In Arabidopsis thaliana (Mouse-ear cress), this protein is Probable mannose-1-phosphate guanylyltransferase 2.